A 606-amino-acid polypeptide reads, in one-letter code: Glutamine--fructose-6-phosphate aminotransferase [isomerizing] (606 aa).

Cysteine 2 functions as the Nucleophile; for GATase activity in the catalytic mechanism. Positions 2–218 (CGIFGYLGQR…SGELAVLRIG (217 aa)) constitute a Glutamine amidotransferase type-2 domain. SIS domains are found at residues 278-424 (FAES…QRQE) and 455-596 (WRCR…VDRP). Lysine 601 acts as the For Fru-6P isomerization activity in catalysis.

In terms of assembly, homodimer.

Its subcellular location is the cytoplasm. The enzyme catalyses D-fructose 6-phosphate + L-glutamine = D-glucosamine 6-phosphate + L-glutamate. Catalyzes the first step in hexosamine metabolism, converting fructose-6P into glucosamine-6P using glutamine as a nitrogen source. The polypeptide is Glutamine--fructose-6-phosphate aminotransferase [isomerizing] (Chlamydia muridarum (strain MoPn / Nigg)).